We begin with the raw amino-acid sequence, 307 residues long: Glutaminase (307 aa).

Ser-66, Asn-116, Glu-160, Asn-167, Tyr-191, Tyr-243, and Val-261 together coordinate substrate.

Belongs to the glutaminase family. Homotetramer.

It catalyses the reaction L-glutamine + H2O = L-glutamate + NH4(+). This chain is Glutaminase, found in Pseudoalteromonas translucida (strain TAC 125).